The following is a 142-amino-acid chain: Large ribosomal subunit protein bL17 (142 aa).

This sequence belongs to the bacterial ribosomal protein bL17 family. As to quaternary structure, part of the 50S ribosomal subunit. Contacts protein L32.

The protein is Large ribosomal subunit protein bL17 of Methylocella silvestris (strain DSM 15510 / CIP 108128 / LMG 27833 / NCIMB 13906 / BL2).